Reading from the N-terminus, the 64-residue chain is Conotoxin Ts-011 (64 aa).

The first 22 residues, 1–22 (MHCLPVLVILLLLIASTPSVDA), serve as a signal peptide directing secretion. Residues 23–52 (RPKTKDDVPPASFHGADDANRILQTLWNLR) constitute a propeptide that is removed on maturation. Residue Ile63 is modified to Isoleucine amide.

It belongs to the conotoxin T superfamily. Post-translationally, contains 2 disulfide bonds that can be either 'C1-C3, C2-C4' or 'C1-C4, C2-C3', since these disulfide connectivities have been observed for conotoxins with cysteine framework V (for examples, see AC P0DQQ7 and AC P81755). In terms of tissue distribution, expressed by the venom duct.

Its subcellular location is the secreted. This chain is Conotoxin Ts-011, found in Conus tessulatus (Tessellate cone).